Reading from the N-terminus, the 378-residue chain is MKNKTEVKNGGEKKNSKKVSKEESAKEKNEKMKIVKNLIDKGKKSGSLTYKEIMDELQEVDLGPEQIEKIYEVLESVGVDVVGDMHEIEVEEEDLDLTIPEGIAIDDPVRMYLKEIGKVPLLSPEEEIDLAQRIKNGDRSARKKLAEANLRLVVSIAKRYVGRGMLFLDLIQEGNLGLIKAVEKFDFKKGFKFSTYATWWIRQAITRAIADQARTIRIPVHMVETINKLIRVSRQLLQELGREPQPEEIAKIMDMPVDKVREIMKIAQEPVSLETPIGEEEDSHLGDFIPDDEAPAPADAAAFRMLKEQLLKILNTLTPREEKVLRLRFGLDDGRARTLEEVGKEFNVTRERIRQIEAKALRKLRHPSRSKKLKDYLD.

The interval 1–29 (MKNKTEVKNGGEKKNSKKVSKEESAKEKN) is disordered. The interval 145–215 (LAEANLRLVV…TRAIADQART (71 aa)) is sigma-70 factor domain-2. Positions 169–172 (DLIQ) match the Interaction with polymerase core subunit RpoC motif. The tract at residues 224–300 (ETINKLIRVS…DDEAPAPADA (77 aa)) is sigma-70 factor domain-3. The interval 313–366 (ILNTLTPREEKVLRLRFGLDDGRARTLEEVGKEFNVTRERIRQIEAKALRKLRH) is sigma-70 factor domain-4. A DNA-binding region (H-T-H motif) is located at residues 339-358 (LEEVGKEFNVTRERIRQIEA).

It belongs to the sigma-70 factor family. RpoD/SigA subfamily. Interacts transiently with the RNA polymerase catalytic core.

Its subcellular location is the cytoplasm. In terms of biological role, sigma factors are initiation factors that promote the attachment of RNA polymerase to specific initiation sites and are then released. This sigma factor is the primary sigma factor during exponential growth. This Clostridium acetobutylicum (strain ATCC 824 / DSM 792 / JCM 1419 / IAM 19013 / LMG 5710 / NBRC 13948 / NRRL B-527 / VKM B-1787 / 2291 / W) protein is RNA polymerase sigma factor SigA.